The chain runs to 328 residues: Beta-ketoacyl-[acyl-carrier-protein] synthase III (328 aa).

Residues Cys122 and His255 contribute to the active site. The tract at residues 256-260 is ACP-binding; sequence QANIR. Residue Asn285 is part of the active site.

This sequence belongs to the thiolase-like superfamily. FabH family. In terms of assembly, homodimer.

It localises to the cytoplasm. It catalyses the reaction malonyl-[ACP] + acetyl-CoA + H(+) = 3-oxobutanoyl-[ACP] + CO2 + CoA. It functions in the pathway lipid metabolism; fatty acid biosynthesis. Functionally, catalyzes the condensation reaction of fatty acid synthesis by the addition to an acyl acceptor of two carbons from malonyl-ACP. Catalyzes the first condensation reaction which initiates fatty acid synthesis and may therefore play a role in governing the total rate of fatty acid production. Possesses both acetoacetyl-ACP synthase and acetyl transacylase activities. Its substrate specificity determines the biosynthesis of branched-chain and/or straight-chain of fatty acids. This chain is Beta-ketoacyl-[acyl-carrier-protein] synthase III, found in Janthinobacterium sp. (strain Marseille) (Minibacterium massiliensis).